The following is a 344-amino-acid chain: Arginine N-succinyltransferase (344 aa).

L125 serves as a coordination point for succinyl-CoA. The active-site Proton donor is the H229.

This sequence belongs to the arginine N-succinyltransferase family.

It catalyses the reaction succinyl-CoA + L-arginine = N(2)-succinyl-L-arginine + CoA + H(+). Its pathway is amino-acid degradation; L-arginine degradation via AST pathway; L-glutamate and succinate from L-arginine: step 1/5. Catalyzes the transfer of succinyl-CoA to arginine to produce N(2)-succinylarginine. This Escherichia coli O6:K15:H31 (strain 536 / UPEC) protein is Arginine N-succinyltransferase.